The following is a 131-amino-acid chain: Small ribosomal subunit protein uS11 (131 aa).

The protein belongs to the universal ribosomal protein uS11 family. In terms of assembly, part of the 30S ribosomal subunit.

In terms of biological role, located on the platform of the 30S subunit. The sequence is that of Small ribosomal subunit protein uS11 from Methanospirillum hungatei JF-1 (strain ATCC 27890 / DSM 864 / NBRC 100397 / JF-1).